A 165-amino-acid polypeptide reads, in one-letter code: 3-isopropylmalate dehydratase small subunit (165 aa).

It belongs to the LeuD family. LeuD type 2 subfamily. Heterodimer of LeuC and LeuD.

The catalysed reaction is (2R,3S)-3-isopropylmalate = (2S)-2-isopropylmalate. Its pathway is amino-acid biosynthesis; L-leucine biosynthesis; L-leucine from 3-methyl-2-oxobutanoate: step 2/4. Functionally, catalyzes the isomerization between 2-isopropylmalate and 3-isopropylmalate, via the formation of 2-isopropylmaleate. In Saccharolobus islandicus (strain Y.G.57.14 / Yellowstone #1) (Sulfolobus islandicus), this protein is 3-isopropylmalate dehydratase small subunit.